Reading from the N-terminus, the 23-residue chain is Dahlein-4.1 (23 aa).

As to expression, expressed by the skin dorsal glands.

The protein localises to the secreted. In terms of biological role, has no antimicrobial activity. The sequence is that of Dahlein-4.1 from Ranoidea dahlii (Dahl's aquatic frog).